A 210-amino-acid chain; its full sequence is Thymidylate kinase (210 aa).

11–18 (GVDGSGKS) serves as a coordination point for ATP.

Belongs to the thymidylate kinase family.

The enzyme catalyses dTMP + ATP = dTDP + ADP. Functionally, phosphorylation of dTMP to form dTDP in both de novo and salvage pathways of dTTP synthesis. In Mycoplasmoides gallisepticum (strain R(low / passage 15 / clone 2)) (Mycoplasma gallisepticum), this protein is Thymidylate kinase.